A 544-amino-acid chain; its full sequence is Chaperonin GroEL (544 aa).

Residues 30–33 (TLGP), lysine 51, 87–91 (DGTTT), glycine 415, 479–481 (NAA), and aspartate 495 each bind ATP.

The protein belongs to the chaperonin (HSP60) family. As to quaternary structure, forms a cylinder of 14 subunits composed of two heptameric rings stacked back-to-back. Interacts with the co-chaperonin GroES.

The protein localises to the cytoplasm. It catalyses the reaction ATP + H2O + a folded polypeptide = ADP + phosphate + an unfolded polypeptide.. In terms of biological role, together with its co-chaperonin GroES, plays an essential role in assisting protein folding. The GroEL-GroES system forms a nano-cage that allows encapsulation of the non-native substrate proteins and provides a physical environment optimized to promote and accelerate protein folding. The protein is Chaperonin GroEL of Acinetobacter baumannii (strain AB307-0294).